A 452-amino-acid polypeptide reads, in one-letter code: MVLNIKAPENIVLKPTITVFGVGGAGSNAVNNMISANLQGANFVVANTDAQSLEHSLCTNKIQLGVSTTRGLGAGASPEVGALAAQESESEIRNYLENSNMVFITAGMGGGTGTGSAPVIARIAKELGILTVGVVTKPFHFEGGHRMKTADKGLIELQQFVDTLIVIPNQNLFRIANEQTTFADAFKMADDVLHAGVRGVTDLMIMPGLINLDFADIKAVMSEMGKAMMGTGEASGEDRAIKAAESAISNPLLDHSSMCGARGVLINITGGSDMTLFEVDNAANRIREEVDNLDANIIFGSTFNPELKGMIRVSVVATGIDADKVPTYKPAIAETTNIVPEETYNKAIAQPTQIEEMPDFNSYSTENIEITDSPINQNFIGNEKELGLHANTFNKSEDDSPKPSFLGKIWGSLRASNNQTLERKNVVVSTLDQDNKESDIHDIPAFLRKKRD.

Residues 24–28 (GAGSN), 111–113 (GTG), E142, R146, and D190 contribute to the GTP site. The tract at residues 432-452 (DQDNKESDIHDIPAFLRKKRD) is disordered. Over residues 433–442 (QDNKESDIHD) the composition is skewed to basic and acidic residues.

Belongs to the FtsZ family. As to quaternary structure, homodimer. Polymerizes to form a dynamic ring structure in a strictly GTP-dependent manner. Interacts directly with several other division proteins.

It is found in the cytoplasm. In terms of biological role, essential cell division protein that forms a contractile ring structure (Z ring) at the future cell division site. The regulation of the ring assembly controls the timing and the location of cell division. One of the functions of the FtsZ ring is to recruit other cell division proteins to the septum to produce a new cell wall between the dividing cells. Binds GTP and shows GTPase activity. In Rickettsia conorii (strain ATCC VR-613 / Malish 7), this protein is Cell division protein FtsZ.